A 101-amino-acid chain; its full sequence is Pro-corazonin (101 aa).

The first 16 residues, 1 to 16, serve as a signal peptide directing secretion; that stretch reads MLVLFVLSLVVSCALC. At asparagine 27 the chain carries Asparagine amide. Residues 31-101 constitute a propeptide that is removed on maturation; sequence SNFPAEISAL…REKAPNNDNY (71 aa).

The protein belongs to the corazonin family. Expressed in central brain and the retrocerebral complex but not in antennal lobes, optic lobes or in gnathal, thoracic and abdominal ganglia (at protein level).

It is found in the secreted. Functionally, cardioactive peptide. Corazonin is probably involved in the physiological regulation of the heart beat. The chain is Pro-corazonin from Camponotus floridanus (Florida carpenter ant).